A 138-amino-acid polypeptide reads, in one-letter code: Small ribosomal subunit protein uS11c (138 aa).

Residues 1–23 (MAKAIPRRSSRRNGRIGSRKSAR) are disordered.

This sequence belongs to the universal ribosomal protein uS11 family. In terms of assembly, part of the 30S ribosomal subunit.

Its subcellular location is the plastid. The protein localises to the chloroplast. This is Small ribosomal subunit protein uS11c from Ipomoea purpurea (Common morning glory).